Here is a 199-residue protein sequence, read N- to C-terminus: Nucleoside triphosphate pyrophosphatase (199 aa).

Aspartate 76 serves as the catalytic Proton acceptor.

This sequence belongs to the Maf family. Requires a divalent metal cation as cofactor.

It localises to the cytoplasm. The enzyme catalyses a ribonucleoside 5'-triphosphate + H2O = a ribonucleoside 5'-phosphate + diphosphate + H(+). The catalysed reaction is a 2'-deoxyribonucleoside 5'-triphosphate + H2O = a 2'-deoxyribonucleoside 5'-phosphate + diphosphate + H(+). Functionally, nucleoside triphosphate pyrophosphatase. May have a dual role in cell division arrest and in preventing the incorporation of modified nucleotides into cellular nucleic acids. The polypeptide is Nucleoside triphosphate pyrophosphatase (Roseobacter denitrificans (strain ATCC 33942 / OCh 114) (Erythrobacter sp. (strain OCh 114))).